The following is a 142-amino-acid chain: UPF0102 protein Bcep1808_0248 (142 aa).

This sequence belongs to the UPF0102 family.

In Burkholderia vietnamiensis (strain G4 / LMG 22486) (Burkholderia cepacia (strain R1808)), this protein is UPF0102 protein Bcep1808_0248.